The primary structure comprises 506 residues: Histidine ammonia-lyase (506 aa).

The 5-imidazolinone (Ala-Gly) cross-link spans 143–145 (ASG). A 2,3-didehydroalanine (Ser) modification is found at Ser144.

Belongs to the PAL/histidase family. In terms of processing, contains an active site 4-methylidene-imidazol-5-one (MIO), which is formed autocatalytically by cyclization and dehydration of residues Ala-Ser-Gly.

The protein localises to the cytoplasm. The enzyme catalyses L-histidine = trans-urocanate + NH4(+). It functions in the pathway amino-acid degradation; L-histidine degradation into L-glutamate; N-formimidoyl-L-glutamate from L-histidine: step 1/3. In Salmonella typhi, this protein is Histidine ammonia-lyase.